The primary structure comprises 195 residues: MGYIPYVIENTDRGERSYDIYSRLLKDRIVLLSGEINDSVASSIVAQLLFLEAEDPEKDIGLYINSPGGVITSGLSIYDTMNFIRPDVSTICIGQAASMGAFLLSCGAKGKRFSLPHSRIMIHQPLGGAQGQASDIEIISNEILRLKGLMNSILAQNSGQSLEQIAKDTDRDFYMSAKEAKEYGLIDKVLQKNVK.

Ser98 acts as the Nucleophile in catalysis. Residue His123 is part of the active site.

This sequence belongs to the peptidase S14 family. Fourteen ClpP subunits assemble into 2 heptameric rings which stack back to back to give a disk-like structure with a central cavity, resembling the structure of eukaryotic proteasomes.

It localises to the cytoplasm. It carries out the reaction Hydrolysis of proteins to small peptides in the presence of ATP and magnesium. alpha-casein is the usual test substrate. In the absence of ATP, only oligopeptides shorter than five residues are hydrolyzed (such as succinyl-Leu-Tyr-|-NHMec, and Leu-Tyr-Leu-|-Tyr-Trp, in which cleavage of the -Tyr-|-Leu- and -Tyr-|-Trp bonds also occurs).. Cleaves peptides in various proteins in a process that requires ATP hydrolysis. Has a chymotrypsin-like activity. Plays a major role in the degradation of misfolded proteins. This chain is ATP-dependent Clp protease proteolytic subunit, found in Helicobacter pylori (strain G27).